Here is a 191-residue protein sequence, read N- to C-terminus: UPF0312 protein PSPA7_0523 (191 aa).

The N-terminal stretch at 1–23 is a signal peptide; it reads MLKKTLAALALGSALFTAGQAMA.

It belongs to the UPF0312 family. Type 1 subfamily.

It localises to the periplasm. The sequence is that of UPF0312 protein PSPA7_0523 from Pseudomonas paraeruginosa (strain DSM 24068 / PA7) (Pseudomonas aeruginosa (strain PA7)).